Consider the following 98-residue polypeptide: Large ribosomal subunit protein bL27 (98 aa).

A compositionally biased stretch (polar residues) spans 1-11 (MASKASGGSTR). The segment at 1–20 (MASKASGGSTRNGRDSISKR) is disordered.

It belongs to the bacterial ribosomal protein bL27 family.

In Aquifex aeolicus (strain VF5), this protein is Large ribosomal subunit protein bL27.